The sequence spans 144 residues: Putative pre-16S rRNA nuclease (144 aa).

It belongs to the YqgF nuclease family.

It localises to the cytoplasm. Its function is as follows. Could be a nuclease involved in processing of the 5'-end of pre-16S rRNA. This chain is Putative pre-16S rRNA nuclease, found in Oleidesulfovibrio alaskensis (strain ATCC BAA-1058 / DSM 17464 / G20) (Desulfovibrio alaskensis).